The sequence spans 441 residues: Malate dehydrogenase [NADP], chloroplastic (441 aa).

The N-terminal 51 residues, 1 to 51 (MAVAELSPSYKTQLKTCQQLSSSLSTRLSDHRKFSLRLLPRPVSVRGGIRC), are a transit peptide targeting the chloroplast. A disulfide bond links C75 and C80. Residue 104 to 110 (GAAGMIS) participates in NADP(+) binding. Residues R185 and R191 each coordinate substrate. Position 198 (N198) interacts with NADP(+). Q205 provides a ligand contact to NAD(+). Residue 222–224 (VGN) coordinates NADP(+). Substrate-binding residues include N224 and R255. H280 serves as the catalytic Proton acceptor. C416 and C428 are disulfide-bonded.

Belongs to the LDH/MDH superfamily. MDH type 2 family. As to quaternary structure, homodimer.

It is found in the plastid. The protein resides in the chloroplast. It carries out the reaction (S)-malate + NADP(+) = oxaloacetate + NADPH + H(+). Its activity is regulated as follows. Chloroplast NADP-MDH is activated upon illumination. In order to be enzymatically active, disulfide bridges on the protein must be reduced by thioredoxin which receives electrons from ferredoxin and the electron transport system of photosynthesis. The chloroplastic, NADP-dependent form is essential for the photosynthesis C4 cycle, which allows plants to circumvent the problem of photorespiration. In C4 plants, NADP-MDH activity acts to convert oxaloacetate to malate in chloroplasts of mesophyll cells for transport to the bundle sheath cells. In Mesembryanthemum crystallinum (Common ice plant), this protein is Malate dehydrogenase [NADP], chloroplastic (MDH1).